The chain runs to 187 residues: Peptidyl-tRNA hydrolase (187 aa).

Residue Tyr-14 coordinates tRNA. The active-site Proton acceptor is the His-19. Residues Tyr-64, Asn-66, and Asn-112 each coordinate tRNA.

Belongs to the PTH family. As to quaternary structure, monomer.

It is found in the cytoplasm. The catalysed reaction is an N-acyl-L-alpha-aminoacyl-tRNA + H2O = an N-acyl-L-amino acid + a tRNA + H(+). Its function is as follows. Hydrolyzes ribosome-free peptidyl-tRNAs (with 1 or more amino acids incorporated), which drop off the ribosome during protein synthesis, or as a result of ribosome stalling. Catalyzes the release of premature peptidyl moieties from peptidyl-tRNA molecules trapped in stalled 50S ribosomal subunits, and thus maintains levels of free tRNAs and 50S ribosomes. This chain is Peptidyl-tRNA hydrolase, found in Clostridium acetobutylicum (strain ATCC 824 / DSM 792 / JCM 1419 / IAM 19013 / LMG 5710 / NBRC 13948 / NRRL B-527 / VKM B-1787 / 2291 / W).